The sequence spans 358 residues: UDP-N-acetylglucosamine--N-acetylmuramyl-(pentapeptide) pyrophosphoryl-undecaprenol N-acetylglucosamine transferase (358 aa).

Residues 11–13 (TGG), N124, R164, S195, and Q291 contribute to the UDP-N-acetyl-alpha-D-glucosamine site.

This sequence belongs to the glycosyltransferase 28 family. MurG subfamily.

It localises to the cell inner membrane. The enzyme catalyses di-trans,octa-cis-undecaprenyl diphospho-N-acetyl-alpha-D-muramoyl-L-alanyl-D-glutamyl-meso-2,6-diaminopimeloyl-D-alanyl-D-alanine + UDP-N-acetyl-alpha-D-glucosamine = di-trans,octa-cis-undecaprenyl diphospho-[N-acetyl-alpha-D-glucosaminyl-(1-&gt;4)]-N-acetyl-alpha-D-muramoyl-L-alanyl-D-glutamyl-meso-2,6-diaminopimeloyl-D-alanyl-D-alanine + UDP + H(+). Its pathway is cell wall biogenesis; peptidoglycan biosynthesis. Functionally, cell wall formation. Catalyzes the transfer of a GlcNAc subunit on undecaprenyl-pyrophosphoryl-MurNAc-pentapeptide (lipid intermediate I) to form undecaprenyl-pyrophosphoryl-MurNAc-(pentapeptide)GlcNAc (lipid intermediate II). The sequence is that of UDP-N-acetylglucosamine--N-acetylmuramyl-(pentapeptide) pyrophosphoryl-undecaprenol N-acetylglucosamine transferase from Leptospira interrogans serogroup Icterohaemorrhagiae serovar copenhageni (strain Fiocruz L1-130).